A 464-amino-acid polypeptide reads, in one-letter code: MLNKLNLPIHIIGGGLAGSEASWQIAQLGIPVILHEMRPQRLSEAHKTDKLAELVCSNSFRSDDSLTNAVGLLHAEMRLAKSLIMKAADANKVPAGSALAVDRDGFSQTVTESLENHPLITIKREEIHDIPENWHNVIIATGPLTSPALAYAIQAVTGTEALSFFDAIAPIIYTDSINMNICWYQSRYDKIGPGGTGKDYINCPLDKEQYEAFIQALKDGEKIEFREFENVPYFDGCLPIEVMAERGVETLRHGPMKPMGLTNTHTPKVKAYAIVQLRQDNMLGTLYNMVGFQTKLKYSEQVRIFRTIPGLEKAEFARLGGLHRNTYLDSPTILDETLRLKKKPQLRFAGQITGCEGYVESSAIGLLAGRFAAAEYNNTYPSLPPKTTAFGALLNHITSGYIVTQETEKHSFQPMNINFGLFPPIDSTNHQRKTMQYKEKKLAKRQAIVERALNDCTQWLNGLK.

Residue 13-18 (GGGLAG) participates in FAD binding.

It belongs to the MnmG family. TrmFO subfamily. It depends on FAD as a cofactor.

The protein localises to the cytoplasm. The catalysed reaction is uridine(54) in tRNA + (6R)-5,10-methylene-5,6,7,8-tetrahydrofolate + NADH + H(+) = 5-methyluridine(54) in tRNA + (6S)-5,6,7,8-tetrahydrofolate + NAD(+). It catalyses the reaction uridine(54) in tRNA + (6R)-5,10-methylene-5,6,7,8-tetrahydrofolate + NADPH + H(+) = 5-methyluridine(54) in tRNA + (6S)-5,6,7,8-tetrahydrofolate + NADP(+). Functionally, catalyzes the folate-dependent formation of 5-methyl-uridine at position 54 (M-5-U54) in all tRNAs. This is Methylenetetrahydrofolate--tRNA-(uracil-5-)-methyltransferase TrmFO from Bartonella bacilliformis (strain ATCC 35685 / KC583 / Herrer 020/F12,63).